The primary structure comprises 404 residues: Propionate kinase (404 aa).

It belongs to the acetokinase family. PduW subfamily.

The protein localises to the cytoplasm. The catalysed reaction is propanoate + ATP = propanoyl phosphate + ADP. It participates in polyol metabolism; 1,2-propanediol degradation. In terms of biological role, works with phosphate acetyltransferase (pta) to capture exogenous propionate and regenerate propionyl-CoA during degradation of 1,2-propanediol (1,2-PD). The sequence is that of Propionate kinase from Escherichia fergusonii (strain ATCC 35469 / DSM 13698 / CCUG 18766 / IAM 14443 / JCM 21226 / LMG 7866 / NBRC 102419 / NCTC 12128 / CDC 0568-73).